Consider the following 237-residue polypeptide: Arginine-binding periplasmic protein (237 aa).

Positions M1–A18 are cleaved as a signal peptide.

The protein belongs to the bacterial solute-binding protein 3 family.

The protein resides in the periplasm. Its function is as follows. Binds arginine; part of the arginine periplasmic transport system. The sequence is that of Arginine-binding periplasmic protein (lapT) from Mannheimia haemolytica (Pasteurella haemolytica).